The chain runs to 245 residues: Large ribosomal subunit protein uL2 (245 aa).

The tract at residues 198–245 (VSHPHGGGSHKRPGKPTTVARTAPPGQKVGHIAARKTGRAKRRAATKR) is disordered. Positions 230 to 245 (AARKTGRAKRRAATKR) are enriched in basic residues.

It belongs to the universal ribosomal protein uL2 family. Part of the 50S ribosomal subunit. Forms a bridge to the 30S subunit in the 70S ribosome.

In terms of biological role, one of the primary rRNA binding proteins. Required for association of the 30S and 50S subunits to form the 70S ribosome, for tRNA binding and peptide bond formation. It has been suggested to have peptidyltransferase activity; this is somewhat controversial. Makes several contacts with the 16S rRNA in the 70S ribosome. The polypeptide is Large ribosomal subunit protein uL2 (Korarchaeum cryptofilum (strain OPF8)).